Consider the following 382-residue polypeptide: Chaperone protein DnaJ (382 aa).

A J domain is found at 5 to 70; that stretch reads DYYDLLGLSK…DKRAAYDRYG (66 aa). The CR-type zinc finger occupies 138–216; it reads GTKVPINYVT…CSGSGRVRDE (79 aa). Residues Cys-151, Cys-154, Cys-168, Cys-171, Cys-190, Cys-193, Cys-204, and Cys-207 each contribute to the Zn(2+) site. CXXCXGXG motif repeat units follow at residues 151–158, 168–175, 190–197, and 204–211; these read CSSCSGSG, CNTCHGAG, CHVCNGEG, and CKKCSGSG.

It belongs to the DnaJ family. Homodimer. The cofactor is Zn(2+).

The protein resides in the cytoplasm. Its function is as follows. Participates actively in the response to hyperosmotic and heat shock by preventing the aggregation of stress-denatured proteins and by disaggregating proteins, also in an autonomous, DnaK-independent fashion. Unfolded proteins bind initially to DnaJ; upon interaction with the DnaJ-bound protein, DnaK hydrolyzes its bound ATP, resulting in the formation of a stable complex. GrpE releases ADP from DnaK; ATP binding to DnaK triggers the release of the substrate protein, thus completing the reaction cycle. Several rounds of ATP-dependent interactions between DnaJ, DnaK and GrpE are required for fully efficient folding. Also involved, together with DnaK and GrpE, in the DNA replication of plasmids through activation of initiation proteins. This Ehrlichia ruminantium (strain Gardel) protein is Chaperone protein DnaJ.